Reading from the N-terminus, the 884-residue chain is DNA mismatch repair protein MutS (884 aa).

651 to 658 (GPNMSGKS) is an ATP binding site. Positions 843–884 (LRNQGKSQPAQKNCKKEPAPNRSPDPAVGDQLSLIPAPLFPD) are disordered.

It belongs to the DNA mismatch repair MutS family.

Functionally, this protein is involved in the repair of mismatches in DNA. It is possible that it carries out the mismatch recognition step. This protein has a weak ATPase activity. The protein is DNA mismatch repair protein MutS of Synechococcus sp. (strain JA-2-3B'a(2-13)) (Cyanobacteria bacterium Yellowstone B-Prime).